A 122-amino-acid chain; its full sequence is MIQQETRLHVADNTGAKELLAIRVLGGSKRRYAGIGDVIVASVKDAIPGGSVKKGDVVKAVVVRTVKESRRADGSYIKFDENAAVILGSGREPKGTRIFGPVGRELREHKFMKIVSLAPEVI.

The protein belongs to the universal ribosomal protein uL14 family. In terms of assembly, part of the 50S ribosomal subunit. Forms a cluster with proteins L3 and L19. In the 70S ribosome, L14 and L19 interact and together make contacts with the 16S rRNA in bridges B5 and B8.

Functionally, binds to 23S rRNA. Forms part of two intersubunit bridges in the 70S ribosome. The protein is Large ribosomal subunit protein uL14 of Bifidobacterium longum (strain DJO10A).